A 209-amino-acid polypeptide reads, in one-letter code: High frequency lysogenization protein HflD homolog (209 aa).

This sequence belongs to the HflD family.

It localises to the cytoplasm. The protein localises to the cell inner membrane. This chain is High frequency lysogenization protein HflD homolog, found in Saccharophagus degradans (strain 2-40 / ATCC 43961 / DSM 17024).